A 132-amino-acid chain; its full sequence is DNA-directed RNA polymerase subunit omega (132 aa).

Belongs to the RNA polymerase subunit omega family. The RNAP catalytic core consists of 2 alpha, 1 beta, 1 beta' and 1 omega subunit. When a sigma factor is associated with the core the holoenzyme is formed, which can initiate transcription.

It carries out the reaction RNA(n) + a ribonucleoside 5'-triphosphate = RNA(n+1) + diphosphate. Its function is as follows. Promotes RNA polymerase assembly. Latches the N- and C-terminal regions of the beta' subunit thereby facilitating its interaction with the beta and alpha subunits. The protein is DNA-directed RNA polymerase subunit omega of Bartonella bacilliformis (strain ATCC 35685 / KC583 / Herrer 020/F12,63).